The primary structure comprises 356 residues: Tyrosinase P (356 aa).

Positions M1–G19 are cleaved as a signal peptide. Residue N81 is glycosylated (N-linked (GlcNAc...) asparagine). H87 and H96 together coordinate Cu cation. 2 N-linked (GlcNAc...) asparagine glycosylation sites follow: N148 and N193. Residue H203 coordinates Cu cation. N-linked (GlcNAc...) asparagine glycosylation occurs at N226. Residues H263 and H286 each contribute to the Cu cation site. The N-linked (GlcNAc...) asparagine glycan is linked to N309.

This sequence belongs to the tyrosinase family. Cu(2+) is required as a cofactor. Glycosylated.

It localises to the endoplasmic reticulum lumen. Its subcellular location is the golgi apparatus lumen. The catalysed reaction is aspulvinone E + O2 = (5Z)-3-(3,4-dihydroxyphenyl)-5-[(3,4-dihydroxyphenyl)methylidene]-5-oxo-2,5-dihydrofuran-3-olate. The enzyme catalyses aspulvinone E + O2 = (2Z)-2-[(3,4-dioxocyclohexa-1,5-dien-1-yl)methylidene]-4-(4-hydroxyphenyl)-5-oxo-2,5-dihydrofuran-3-olate + H2O. Activity is inhibited by the presence of dithiothreitol (DTT). Its function is as follows. Tyrosinase; part of the gene cluster that mediates the biosynthesis of Asp-melanin, a pigment that confers resistance against UV light and hampers phagocytosis by soil amoeba. The nonribosomal peptide synthase melA converts 4-hydroxyphenylpyruvate (4-HPPA) to aspulvinone E. The tyrosinase tyrP then performs hydroxylations of both aromatic moieties of aspulvinone E. The product of tyrP is highly unstable, and, due to the high reactivity of methides and ortho-diquinones, the polymeric Asp-melanin forms spontaneously. The sequence is that of Tyrosinase P (tyrP) from Aspergillus terreus.